Consider the following 2261-residue polypeptide: Phospholipid-transporting ATPase ABCA1 (2261 aa).

The S-palmitoyl cysteine moiety is linked to residue cysteine 3. N-linked (GlcNAc...) asparagine glycosylation is present at asparagine 14. Residues 22–42 traverse the membrane as a helical segment; that stretch reads TCQLLLEVAWPLFIFLILISV. Cysteine 23 carries S-palmitoyl cysteine lipidation. The Extracellular segment spans residues 43–639; that stretch reads RLSYPPYEQH…DIFLRVMSRS (597 aa). An annulus domain 1 region spans residues 69 to 80; the sequence is WVQGIICNANNP. Cysteines 75 and 309 form a disulfide. 8 N-linked (GlcNAc...) asparagine glycosylation sites follow: asparagine 98, asparagine 151, asparagine 161, asparagine 196, asparagine 244, asparagine 292, asparagine 337, and asparagine 349. Residues 368–379 are annulus domain 2; that stretch reads SRIIWKALKPLL. N-linked (GlcNAc...) asparagine glycosylation is found at asparagine 400, asparagine 478, asparagine 489, and asparagine 521. The tract at residues 564-594 is gateway domain; that stretch reads ERTNKIKDGYWDPGPRADPFEDMRYVWGGFA. A run of 5 helical transmembrane segments spans residues 640 to 660, 683 to 703, 716 to 736, 745 to 765, and 777 to 797; these read MPLF…KSIV, FSWF…LVVI, SVVF…CFLI, LAAA…VLCV, and IFAS…FALF. Asparagine 820 is a glycosylation site (N-linked (GlcNAc...) asparagine). The chain crosses the membrane as a helical span at residues 827 to 847; the sequence is MMLFDTFLYGVMTWYIEAVFP. Residues 899-1131 enclose the ABC transporter 1 domain; sequence VSIQNLVKVY…LGTGYYLTLV (233 aa). 933 to 940 serves as a coordination point for ATP; it reads GHNGAGKT. Residues 941–961 form a helical membrane-spanning segment; that stretch reads TTMSILTGLFPPTSGTAYILG. A Phosphoserine; by PKA modification is found at serine 1042. S-palmitoyl cysteine attachment occurs at residues cysteine 1110 and cysteine 1111. Asparagine 1144 and asparagine 1294 each carry an N-linked (GlcNAc...) asparagine glycan. The interval 1285–1310 is disordered; the sequence is FTEDDAVDPNDSDIDPESRETDLLSG. Residues 1287–1299 are compositionally biased toward acidic residues; it reads EDDAVDPNDSDID. Serine 1296 carries the post-translational modification Phosphoserine. A helical membrane pass occupies residues 1351-1371; the sequence is IVLPAVFVCIALVFSLIVPPF. Residues 1372–1656 are Extracellular-facing; the sequence is GKYPSLELQP…ALMTTSVDVL (285 aa). N-linked (GlcNAc...) asparagine glycosylation occurs at asparagine 1453. The cysteines at positions 1463 and 1477 are disulfide-linked. 3 N-linked (GlcNAc...) asparagine glycosylation sites follow: asparagine 1499, asparagine 1504, and asparagine 1637. Helical transmembrane passes span 1657–1677, 1703–1723, 1735–1755, 1768–1788, 1802–1822, and 1852–1872; these read VSIC…VFLI, FVWD…IFIC, LPVL…LMYP, VVLT…TFVL, ILKS…LIDM, and NLFA…LIQY. An ABC transporter 2 domain is found at 1912 to 2144; it reads LEIKELTKIY…FGDGYTIVVR (233 aa). 1946–1953 serves as a coordination point for ATP; that stretch reads GVNGAGKS. Asparagine 2044 carries N-linked (GlcNAc...) asparagine glycosylation. At serine 2054 the chain carries Phosphoserine; by PKA. Asparagine 2238 carries N-linked (GlcNAc...) asparagine glycosylation.

It belongs to the ABC transporter superfamily. ABCA family. In terms of assembly, interacts with MEGF10. May interact with APOE1; functionally associated with APOE1 in the biogenesis of HDLs. Interacts with ABCA8; this interaction potentiates cholesterol efflux. Interacts with ABCA12 and NR1H2; this interaction is required for ABCA1 localization to the cell surface and is necessary for its normal activity and stability. Post-translationally, phosphorylation on Ser-2054 regulates phospholipid efflux. Palmitoylated by ZDHHC8. Palmitoylation is essential for localization to the plasma membrane. As to expression, widely expressed in adult tissues. Highest levels are found in pregnant uterus and uterus.

It is found in the cell membrane. It localises to the endosome. The enzyme catalyses ATP + H2O + phospholipidSide 1 = ADP + phosphate + phospholipidSide 2.. The catalysed reaction is a 1,2-diacyl-sn-glycero-3-phosphocholine(out) + ATP + H2O = a 1,2-diacyl-sn-glycero-3-phosphocholine(in) + ADP + phosphate + H(+). It catalyses the reaction a 1,2-diacyl-sn-glycero-3-phospho-L-serine(out) + ATP + H2O = a 1,2-diacyl-sn-glycero-3-phospho-L-serine(in) + ADP + phosphate + H(+). It carries out the reaction a sphingomyelin(in) + ATP + H2O = a sphingomyelin(out) + ADP + phosphate + H(+). The enzyme catalyses cholesterol(in) + ATP + H2O = cholesterol(out) + ADP + phosphate + H(+). With respect to regulation, ATPase activity is decreased by cholesterol and ceramide. ATPase activity is stimulated by phosphatidylcholine and to a lesser degree by phosphatidylserine and sphingomyelin. Phospholipid translocase activity is highly reduced by berylium fluoride and aluminum flouride and reduced by N-ethylmaleimide. Functionally, catalyzes the translocation of specific phospholipids from the cytoplasmic to the extracellular/lumenal leaflet of membrane coupled to the hydrolysis of ATP. Thereby, participates in phospholipid transfer to apolipoproteins to form nascent high density lipoproteins/HDLs. Transports preferentially phosphatidylcholine over phosphatidylserine. May play a similar role in the efflux of intracellular cholesterol to apolipoproteins and the formation of nascent high density lipoproteins/HDLs. Translocates phospholipids from the outer face of the plasma membrane and forces it through its gateway and annulus into an elongated hydrophobic tunnel in its extracellular domain. The polypeptide is Phospholipid-transporting ATPase ABCA1 (Mus musculus (Mouse)).